The primary structure comprises 257 residues: Isoprenyl transferase (257 aa).

Asp-33 is a catalytic residue. Position 33 (Asp-33) interacts with Mg(2+). Residues 34-37 (GNGR), Trp-38, Arg-46, His-50, and 78-80 (STE) contribute to the substrate site. The Proton acceptor role is filled by Asn-81. Substrate-binding positions include Trp-82, Arg-84, Arg-204, and 210 to 212 (RLS). Mg(2+) is bound at residue Glu-223.

The protein belongs to the UPP synthase family. As to quaternary structure, homodimer. Mg(2+) serves as cofactor.

Functionally, catalyzes the condensation of isopentenyl diphosphate (IPP) with allylic pyrophosphates generating different type of terpenoids. The protein is Isoprenyl transferase of Clostridium acetobutylicum (strain ATCC 824 / DSM 792 / JCM 1419 / IAM 19013 / LMG 5710 / NBRC 13948 / NRRL B-527 / VKM B-1787 / 2291 / W).